The chain runs to 685 residues: E3 ubiquitin-protein ligase RNF103 (685 aa).

The next 4 helical transmembrane spans lie at 6–26 (FFLL…EAIV), 326–346 (LFVL…FITQ), 366–386 (LLII…LDSF), and 411–431 (MFYS…GLLI). Residues 526 to 543 (EEMSEGSQDTENDSESEN) show a composition bias toward acidic residues. Positions 526–550 (EEMSEGSQDTENDSESENTDTLSSE) are disordered. The RING-type zinc finger occupies 621–663 (CVVCLENFENGCLLMGLPCGHVFHQNCIVMWLAGGRHCCPVCR).

As to quaternary structure, interacts with DERL1 and VCP. Highly expressed in the normal cerebellum but not in the cerebral cortex.

It localises to the endoplasmic reticulum membrane. It catalyses the reaction S-ubiquitinyl-[E2 ubiquitin-conjugating enzyme]-L-cysteine + [acceptor protein]-L-lysine = [E2 ubiquitin-conjugating enzyme]-L-cysteine + N(6)-ubiquitinyl-[acceptor protein]-L-lysine.. Its pathway is protein modification; protein ubiquitination. Acts as an E2-dependent E3 ubiquitin-protein ligase, probably involved in the ER-associated protein degradation pathway. The polypeptide is E3 ubiquitin-protein ligase RNF103 (RNF103) (Homo sapiens (Human)).